Reading from the N-terminus, the 87-residue chain is Costars family protein (87 aa).

It belongs to the costars family.

This is Costars family protein from Oryza sativa subsp. indica (Rice).